Consider the following 316-residue polypeptide: Adenine deaminase (316 aa).

3 residues coordinate Zn(2+): His14, His16, and His194. The active-site Proton donor is Glu197. Asp275 provides a ligand contact to Zn(2+). Asp276 serves as a coordination point for substrate.

It belongs to the metallo-dependent hydrolases superfamily. Adenosine and AMP deaminases family. Adenine deaminase type 2 subfamily. It depends on Zn(2+) as a cofactor.

The enzyme catalyses adenine + H2O + H(+) = hypoxanthine + NH4(+). Functionally, catalyzes the hydrolytic deamination of adenine to hypoxanthine. Plays an important role in the purine salvage pathway and in nitrogen catabolism. The polypeptide is Adenine deaminase (Pseudomonas paraeruginosa (strain DSM 24068 / PA7) (Pseudomonas aeruginosa (strain PA7))).